A 142-amino-acid chain; its full sequence is Glutamate-rich protein 2 (142 aa).

Disordered stretches follow at residues methionine 1 to leucine 55 and glutamate 104 to glycine 142. Basic and acidic residues predominate over residues glutamate 9–glutamate 27. Residues serine 28–glutamate 43 show a composition bias toward acidic residues. The segment covering aspartate 44 to alanine 53 has biased composition (basic and acidic residues). The span at leucine 109–glycine 142 shows a compositional bias: acidic residues.

This chain is Glutamate-rich protein 2 (ERICH2), found in Bos taurus (Bovine).